Consider the following 1310-residue polypeptide: Adhesion G protein-coupled receptor A3 (1310 aa).

A signal peptide spans 1 to 27 (MEPPPPLLLLPLALLALLWGGERGAAA). In terms of domain architecture, LRRNT spans 28–70 (LPAGCKHDGRARGTGRAAAAAEGKVVCSSLELAQVLPPDTLPN). The Extracellular segment spans residues 28–747 (LPAGCKHDGR…TELYTPAASL (720 aa)). N-linked (GlcNAc...) asparagine glycans are attached at residues asparagine 70 and asparagine 87. LRR repeat units lie at residues 71-92 (RTVTLILSNNKISELKNGSFSG), 95-116 (LLERLDLRNNLISRIAPGAFWG), 119-140 (SLKRLDLTNNRIGCLNADVFRG), and 143-164 (NLVRLNLSGNLFTSLSQGTFDY). 10 N-linked (GlcNAc...) asparagine glycosylation sites follow: asparagine 148, asparagine 195, asparagine 290, asparagine 321, asparagine 422, asparagine 442, asparagine 581, asparagine 641, asparagine 676, and asparagine 717. In terms of domain architecture, LRRCT spans 176-226 (EYLLCDCNILWMHRWVKERNITVRDTRCVYPKSLQAQPVTGVKQELLTCDP). Residues 231 to 329 (PSFYMTPSHR…GNNTRTVDIV (99 aa)) form the Ig-like domain. An intrachain disulfide couples cysteine 253 to cysteine 313. In terms of domain architecture, GAIN-B spans 572 to 739 (LDKQLSFKCN…AVLMDLTGTE (168 aa)). Residues 690 to 739 (AAQWDFDLLNGQGGWKSDGCCILYSDENITTIQCGSLGNYAVLMDLTGTE) are GPS. Cysteines 709 and 723 form a disulfide. Residues 748 to 768 (LHPVVYTTAITLLLCLLAVII) traverse the membrane as a helical segment. The Cytoplasmic portion of the chain corresponds to 769–785 (SYMYHHSLIRISLKSWH). The helical transmembrane segment at 786–806 (MLVNLCFHILLTCVVFVGGIT) threads the bilayer. At 807–815 (QTRNASVCQ) the chain is on the extracellular side. The N-linked (GlcNAc...) asparagine glycan is linked to asparagine 810. The helical transmembrane segment at 816–836 (AVGIILHYSTLATVLWVGVTA) threads the bilayer. Residues 837 to 865 (RNIYKQVTKKAKRCQDPDEPPAPPRPMLR) are Cytoplasmic-facing. A helical transmembrane segment spans residues 866–886 (FYLIGGGIPIIVCGITAAANI). The Extracellular segment spans residues 887–908 (KNYGSRPSAPYCWMAWEPSLGA). A helical membrane pass occupies residues 909-929 (FYGPASFITFVNCMYFLSIFI). The Cytoplasmic portion of the chain corresponds to 930–985 (QLKRHPERKYELKEPTEEQQRLAANENGEINHQDSMSLSLISTSTLENEHSFQSQL). A helical membrane pass occupies residues 986-1006 (LGASLTLLLYVILWMFGAMAV). Residues 1007 to 1013 (SLYYPLD) lie on the Extracellular side of the membrane. A helical transmembrane segment spans residues 1014–1034 (LVFSFFFGATCLSFSAFMMVH). Topologically, residues 1035-1310 (HCINREDVRL…TGLWKHETTV (276 aa)) are cytoplasmic. Disordered regions lie at residues 1065–1084 (PPNSSATNGEAPKCTNSSAE), 1187–1208 (VEGSVQNGLPKSRPGSNEGHSR), and 1221–1264 (YNPP…ADLE). The segment covering 1222-1239 (NPPQQDSSDACSTLPKSS) has biased composition (polar residues). The PDZ-binding signature appears at 1308-1310 (TTV).

It belongs to the G-protein coupled receptor 2 family. Adhesion G-protein coupled receptor (ADGR) subfamily. Interacts (via PDZ-binding motif) with DLG1. As to expression, expressed by spermatogonial progenitor cells located within the outer cell layer of the seminiferous tubule and by multipotent adult spermatogonial-derived stem cells.

Its subcellular location is the membrane. Functionally, orphan receptor that may have a role in planar cell polarity pathway. The sequence is that of Adhesion G protein-coupled receptor A3 (Adgra3) from Mus musculus (Mouse).